Reading from the N-terminus, the 171-residue chain is UPF0398 protein stu0232 (171 aa).

Belongs to the UPF0398 family.

This is UPF0398 protein stu0232 from Streptococcus thermophilus (strain ATCC BAA-250 / LMG 18311).